The following is a 218-amino-acid chain: ATP-dependent dethiobiotin synthetase BioD (218 aa).

An ATP-binding site is contributed by 9–15; the sequence is TNAGKTT. Thr-14 lines the Mg(2+) pocket. The active site involves Lys-35. Lys-35 contributes to the phosphate binding site. Substrate is bound at residue Thr-39. ATP-binding positions include Asp-50, Glu-116, and 116 to 119; that span reads EGAG. The Mg(2+) site is built by Asp-50 and Glu-116. Residue 116–119 participates in phosphate binding; that stretch reads EGAG. 151–154 is a substrate binding site; the sequence is GLIN. ATP is bound by residues Asn-175 and 175–177; that span reads NLK.

Belongs to the dethiobiotin synthetase family. In terms of assembly, homodimer. Mg(2+) serves as cofactor.

It localises to the cytoplasm. It carries out the reaction (7R,8S)-7,8-diammoniononanoate + CO2 + ATP = (4R,5S)-dethiobiotin + ADP + phosphate + 3 H(+). The protein operates within cofactor biosynthesis; biotin biosynthesis; biotin from 7,8-diaminononanoate: step 1/2. In terms of biological role, catalyzes a mechanistically unusual reaction, the ATP-dependent insertion of CO2 between the N7 and N8 nitrogen atoms of 7,8-diaminopelargonic acid (DAPA, also called 7,8-diammoniononanoate) to form a ureido ring. The polypeptide is ATP-dependent dethiobiotin synthetase BioD (Helicobacter pylori (strain ATCC 700392 / 26695) (Campylobacter pylori)).